The sequence spans 254 residues: Type III pantothenate kinase (254 aa).

22 to 29 contacts ATP; sequence VLGNTHVR. Residues tyrosine 89 and 93–96 each bind substrate; that span reads GLDR. The Proton acceptor role is filled by aspartate 95. Aspartate 115 is a K(+) binding site. Threonine 118 contributes to the ATP binding site. Threonine 173 contributes to the substrate binding site.

Belongs to the type III pantothenate kinase family. In terms of assembly, homodimer. NH4(+) is required as a cofactor. Requires K(+) as cofactor.

The protein resides in the cytoplasm. It catalyses the reaction (R)-pantothenate + ATP = (R)-4'-phosphopantothenate + ADP + H(+). It participates in cofactor biosynthesis; coenzyme A biosynthesis; CoA from (R)-pantothenate: step 1/5. In terms of biological role, catalyzes the phosphorylation of pantothenate (Pan), the first step in CoA biosynthesis. The chain is Type III pantothenate kinase from Synechococcus sp. (strain JA-2-3B'a(2-13)) (Cyanobacteria bacterium Yellowstone B-Prime).